Reading from the N-terminus, the 1185-residue chain is MFLKKLELKGFKSFAKPITINFESPITAIVGPNGSGKSNIVDAIRWVLGEQSAKTLRGSRMADVIFAGSKDYKALNKASVTLYLDNQDKILPLDVSTVKISRKVNMDGQSDYYLNGKICRLKDIENLLMDTGLGKDTYSIVGQGKIDSIINSRPEKLRELFEEAAGISKYKSRKMDAEKRLEKTNHDLQRIEDLIWELEKQVGPLEKAAQKAKKYRRLKEELKVLEVNLLLDKWDKNLDRLSSFEEDEQLLIHKLKSLTNNLTESQEKLESLQRTLKVKKDELSRLRDRYYRQKSKREEAENTLCILEERRQGLSREKENLNQEIKDLNLRREELTGRLDEIGSRLIELKEKIDNYNQNYESKKVLLDEIKENLDREKQDLFFLRNNILDGNVELKDISSQFEQLKERGRHLEEEIKRIKTTRDKISSEYDALNEREDKLRTYLKSVDNKIEEKRSVLTDLKEEELNLQARLEEAKKRFNRTRNKLNEKNSHLSILHEMEDSLEGYYRGVKNILKARSKLTGIIGVVADQIEVDKKYELAIETALGGRLQNIIVKDDKSARECVDYLKETKGGQATFLPVNMVNGRKVNFKNNQVKKVDGFLGIASSFVDCEDYLKPVIEYLLGRTIISTDLKSAIEIARLRKRGFKIVTLEGDVINSGGAITGGSKNSNKKMLLSRSRKIEDLKKEVLKLQNSLGEDSKNLNQLENKLKEVLNKKEVIKNDIRDLEIEKNNYHKDLIRLEQEKTKLSERLEEIDEEFVDCHDRLGKNDAAKQKLEDKLKALNDDFSLEKNEIENKEKRVEELEARHENINDEITRLKINLAQLNEKRESLRKEEEKSNKELIELAEKNEEFKERYNKILSEIKGINNKEGQLNELKVKLSGEIEKLKNDLNLTEKEVEEKQQRIDMLQREVSDLQTRLDKKKDEKHQIELKITRLENRNERIVEILENDYDVKPEDGFDDRIKITNYSRAGQKVKELKNAIKKLGTVNQGAIEEYNDLVDRLDYLQNQHDDLLKAKESITKVIQEIEETMSSLFHEAFLKVNGEFNNTFKELFNGGQASLKLTEPENLLETGVEIVAQPPGKQLKKLSLMSGGERALTAIALVFAFLKVNPSPFYILDEIDAPLDDANVTRFARYIKEYSRFAQFLIVTHRKNMMAEAETIYGVTMEESGVSKLISLKLSEQII.

Residue 32-39 coordinates ATP; sequence PNGSGKSN. Residues 167–494 are a coiled coil; it reads ISKYKSRKMD…KLNEKNSHLS (328 aa). The 119-residue stretch at 521–639 folds into the SMC hinge domain; the sequence is TGIIGVVADQ…TDLKSAIEIA (119 aa). Residues 677 to 1031 adopt a coiled-coil conformation; the sequence is RSRKIEDLKK…KVIQEIEETM (355 aa).

It belongs to the SMC family. In terms of assembly, homodimer.

It localises to the cytoplasm. Required for chromosome condensation and partitioning. This chain is Chromosome partition protein Smc, found in Halothermothrix orenii (strain H 168 / OCM 544 / DSM 9562).